The following is a 242-amino-acid chain: Octanoyltransferase (242 aa).

Positions 31 to 206 (SQTTDEIWFL…LFLKNFGYNQ (176 aa)) constitute a BPL/LPL catalytic domain. Substrate-binding positions include 70-77 (RGGQVTYH), 137-139 (SIG), and 150-152 (GLA). The active-site Acyl-thioester intermediate is Cys-168.

This sequence belongs to the LipB family.

The protein localises to the cytoplasm. The enzyme catalyses octanoyl-[ACP] + L-lysyl-[protein] = N(6)-octanoyl-L-lysyl-[protein] + holo-[ACP] + H(+). The protein operates within protein modification; protein lipoylation via endogenous pathway; protein N(6)-(lipoyl)lysine from octanoyl-[acyl-carrier-protein]: step 1/2. Functionally, catalyzes the transfer of endogenously produced octanoic acid from octanoyl-acyl-carrier-protein onto the lipoyl domains of lipoate-dependent enzymes. Lipoyl-ACP can also act as a substrate although octanoyl-ACP is likely to be the physiological substrate. The sequence is that of Octanoyltransferase from Coxiella burnetii (strain Dugway 5J108-111).